The sequence spans 468 residues: Asparagine--tRNA ligase (468 aa).

This sequence belongs to the class-II aminoacyl-tRNA synthetase family. In terms of assembly, homodimer.

Its subcellular location is the cytoplasm. The enzyme catalyses tRNA(Asn) + L-asparagine + ATP = L-asparaginyl-tRNA(Asn) + AMP + diphosphate + H(+). This is Asparagine--tRNA ligase from Parabacteroides distasonis (strain ATCC 8503 / DSM 20701 / CIP 104284 / JCM 5825 / NCTC 11152).